Reading from the N-terminus, the 251-residue chain is Arginine and glutamate-rich protein 1-A (251 aa).

The segment covering 1-48 has biased composition (basic residues); it reads MGRSRSRSSSRSKHSKHSRKRSRSKSKSKKRSRSKEPKRNRRSRSRSG. Positions 1–53 are necessary and sufficient for RNA binding; sequence MGRSRSRSSSRSKHSKHSRKRSRSKSKSKKRSRSKEPKRNRRSRSRSGSRRDR. Disordered stretches follow at residues 1 to 92 and 215 to 251; these read MGRS…ERQR and RMKL…KATE. Composition is skewed to basic and acidic residues over residues 49 to 63, 71 to 92, and 215 to 231; these read SRRD…RTDM, RNND…ERQR, and RMKL…EEQK. Residues 54–251 form a necessary and sufficient for transcriptional regulation region; the sequence is GGSPPDRTDM…RLSFSLKATE (198 aa).

It belongs to the ARGLU1 family.

Its subcellular location is the nucleus. It localises to the nucleus speckle. The protein localises to the chromosome. Dual function regulator of gene expression; regulator of transcription and modulator of alternative splicing. General coactivator of nuclear receptor-induced gene expression. The protein is Arginine and glutamate-rich protein 1-A (arglu1a) of Danio rerio (Zebrafish).